The following is a 156-amino-acid chain: Cyanate hydratase (156 aa).

Active-site residues include Arg96, Glu99, and Ser122.

It belongs to the cyanase family.

The catalysed reaction is cyanate + hydrogencarbonate + 3 H(+) = NH4(+) + 2 CO2. Catalyzes the reaction of cyanate with bicarbonate to produce ammonia and carbon dioxide. The protein is Cyanate hydratase of Burkholderia cenocepacia (strain ATCC BAA-245 / DSM 16553 / LMG 16656 / NCTC 13227 / J2315 / CF5610) (Burkholderia cepacia (strain J2315)).